The following is a 223-amino-acid chain: MKRTKSIRHASFRKNWSARHLTPVALAVATVFMLAGCEKSDETVSLYQNADDCSAANPGKSAECTTAYNNALKEAERTAPKYATREDCVAEFGEGLCQQAPAKAGMAPENQAQAQQSSGSFWMPLMAGYMMGRLMGGGAGFAQQPLFSSKNPASPAYGKYTDATGKNYGAAQPGRTMTVPKTAMAPKPATTTTVTRGGFGESVAKQSTMQRSATGTSSRSMGG.

Residues 178–195 (TVPKTAMAPKPATTTTVT) show a composition bias toward low complexity. The tract at residues 178 to 223 (TVPKTAMAPKPATTTTVTRGGFGESVAKQSTMQRSATGTSSRSMGG) is disordered. The segment covering 204-223 (AKQSTMQRSATGTSSRSMGG) has biased composition (polar residues).

This sequence belongs to the UPF0441 family.

The sequence is that of UPF0441 protein YgiB from Shigella dysenteriae serotype 1 (strain Sd197).